The following is a 285-amino-acid chain: MSTNDNWYIEHFQPTGSAIGFRISGKLDEVQSLFQKIEIYQTTDWGKLMLIDGAVMLTSRDNFFYHEMISHPALFTHPTPKRVVIIGGGDCGTLREVLKHPGVESATQCDIDEQVTRMSEKYFPELCDSNHDARAELLFDDGVAYMANCPAGSVDIVIVDSTDPVGPAEGLFNKAFYESCFKALKDDGLLVQQSESPLALLDLIKEMRTEMGKAGFQSFKTLPFPQPCYPTGWWSVTMASKQAKADFAFRQGAAQAKGFETLYYTAHLHTGVLVAPPFVAKALGE.

Residues 5–241 form the PABS domain; it reads DNWYIEHFQP…GWWSVTMASK (237 aa). Residue glutamine 35 participates in S-methyl-5'-thioadenosine binding. 2 residues coordinate spermidine: histidine 66 and aspartate 90. S-methyl-5'-thioadenosine contacts are provided by residues aspartate 110 and 141 to 142; that span reads DG. Aspartate 160 serves as the catalytic Proton acceptor. 160–163 provides a ligand contact to spermidine; the sequence is DSTD. Proline 167 contacts S-methyl-5'-thioadenosine.

It belongs to the spermidine/spermine synthase family. Homodimer or homotetramer.

Its subcellular location is the cytoplasm. The enzyme catalyses S-adenosyl 3-(methylsulfanyl)propylamine + putrescine = S-methyl-5'-thioadenosine + spermidine + H(+). It participates in amine and polyamine biosynthesis; spermidine biosynthesis; spermidine from putrescine: step 1/1. Catalyzes the irreversible transfer of a propylamine group from the amino donor S-adenosylmethioninamine (decarboxy-AdoMet) to putrescine (1,4-diaminobutane) to yield spermidine. This chain is Polyamine aminopropyltransferase, found in Xanthomonas oryzae pv. oryzae (strain MAFF 311018).